Consider the following 390-residue polypeptide: ATP phosphoribosyltransferase regulatory subunit (390 aa).

It belongs to the class-II aminoacyl-tRNA synthetase family. HisZ subfamily. As to quaternary structure, heteromultimer composed of HisG and HisZ subunits.

It is found in the cytoplasm. It functions in the pathway amino-acid biosynthesis; L-histidine biosynthesis; L-histidine from 5-phospho-alpha-D-ribose 1-diphosphate: step 1/9. Functionally, required for the first step of histidine biosynthesis. May allow the feedback regulation of ATP phosphoribosyltransferase activity by histidine. This chain is ATP phosphoribosyltransferase regulatory subunit, found in Bacillus velezensis (strain DSM 23117 / BGSC 10A6 / LMG 26770 / FZB42) (Bacillus amyloliquefaciens subsp. plantarum).